Consider the following 270-residue polypeptide: ATP synthase subunit a (270 aa).

5 consecutive transmembrane segments (helical) span residues 37–57 (NVHI…LGVF), 98–118 (IAPL…MDLV), 143–163 (DVNI…YYSI), 208–228 (LFGN…MLPW), and 239–259 (AIFH…LTIV).

It belongs to the ATPase A chain family. In terms of assembly, F-type ATPases have 2 components, CF(1) - the catalytic core - and CF(0) - the membrane proton channel. CF(1) has five subunits: alpha(3), beta(3), gamma(1), delta(1), epsilon(1). CF(0) has three main subunits: a(1), b(2) and c(9-12). The alpha and beta chains form an alternating ring which encloses part of the gamma chain. CF(1) is attached to CF(0) by a central stalk formed by the gamma and epsilon chains, while a peripheral stalk is formed by the delta and b chains.

It localises to the cell inner membrane. Its function is as follows. Key component of the proton channel; it plays a direct role in the translocation of protons across the membrane. The chain is ATP synthase subunit a from Vibrio cholerae serotype O1 (strain ATCC 39315 / El Tor Inaba N16961).